A 341-amino-acid chain; its full sequence is 4-(gamma-L-glutamylamino)butanoyl-[BtrI acyl-carrier protein] monooxygenase BtrO (341 aa).

It belongs to the bacterial luciferase oxidoreductase family.

The catalysed reaction is 4-(gamma-L-glutamylamino)butanoyl-[BtrI ACP] + FMNH2 + O2 = 4-(gamma-L-glutamylamino)-(2S)-2-hydroxybutanoyl-[BtrI ACP] + FMN + H2O + H(+). Its pathway is antibiotic biosynthesis; butirosin biosynthesis. In terms of biological role, monooxygenase component of a two-component system involved in the biosynthesis of the side chain of the aminoglycoside antibiotics in the biosynthetic pathway of butirosin. Together with BtrV, mediates hydroxylation of gamma-L-Glu-GABA-S-BtrI. Not able to hydroxylate free substrates, activation by the acyl-carrier protein is mandatory. Octanoyl-S-[BtrI acyl-carrier protein] is also accepted as substrate. The polypeptide is 4-(gamma-L-glutamylamino)butanoyl-[BtrI acyl-carrier protein] monooxygenase BtrO (btrO) (Niallia circulans (Bacillus circulans)).